A 264-amino-acid polypeptide reads, in one-letter code: COP9 signalosome complex subunit 7b (264 aa).

N-acetylalanine is present on A2. Residues 2–159 (AGEQKPSSNL…QLLEVDFCIG (158 aa)) enclose the PCI domain. Residues 188–237 (IEQQVLRANQYKENHNRTQQQVEAEVTNIKKTLKATASSSAQEMEQQLAE) are a coiled coil. Residues 223 to 232 (TASSSAQEME) show a composition bias toward polar residues. The segment at 223–264 (TASSSAQEMEQQLAERECPPHAEQRQPTKKMSKVKGLVSSRH) is disordered. Residues 235–248 (LAERECPPHAEQRQ) are compositionally biased toward basic and acidic residues. S261 carries the phosphothreonine modification. The residue at position 263 (R263) is a Phosphoserine.

It belongs to the CSN7/EIF3M family. CSN7 subfamily. Component of the CSN complex, composed of COPS1/GPS1, COPS2, COPS3, COPS4, COPS5, COPS6, COPS7 (COPS7A or COPS7B), COPS8 and COPS9 isoform 1. In the complex, it probably interacts directly with COPS1, COPS2, COPS4, COPS5, COPS6 and COPS8. Interacts with EIF3S6. As to quaternary structure, (Microbial infection) Interacts with vaccinia virus protein C9L.

The protein resides in the cytoplasm. It is found in the nucleus. Component of the COP9 signalosome complex (CSN), a complex involved in various cellular and developmental processes. The CSN complex is an essential regulator of the ubiquitin (Ubl) conjugation pathway by mediating the deneddylation of the cullin subunits of SCF-type E3 ligase complexes, leading to decrease the Ubl ligase activity of SCF-type complexes such as SCF, CSA or DDB2. The complex is also involved in phosphorylation of p53/TP53, JUN, I-kappa-B-alpha/NFKBIA, ITPK1 and IRF8/ICSBP, possibly via its association with CK2 and PKD kinases. CSN-dependent phosphorylation of TP53 and JUN promotes and protects degradation by the Ubl system, respectively. In Homo sapiens (Human), this protein is COP9 signalosome complex subunit 7b (COPS7B).